Reading from the N-terminus, the 319-residue chain is ATP-dependent 6-phosphofructokinase (319 aa).

Residue Gly11 participates in ATP binding. 21–25 (RAAVR) is a binding site for ADP. ATP is bound by residues 72–73 (RS) and 102–105 (GDGS). Asp103 is a binding site for Mg(2+). 125 to 127 (TID) is a binding site for substrate. The active-site Proton acceptor is Asp127. Residue Arg154 coordinates ADP. Residues Arg162 and 169–171 (MGR) each bind substrate. ADP is bound by residues 185-187 (GAE), Arg211, and 213-215 (KKH). Substrate is bound by residues Glu222, Arg243, and 249-252 (HIQR).

It belongs to the phosphofructokinase type A (PFKA) family. ATP-dependent PFK group I subfamily. Prokaryotic clade 'B1' sub-subfamily. As to quaternary structure, homotetramer. Mg(2+) serves as cofactor.

The protein resides in the cytoplasm. It carries out the reaction beta-D-fructose 6-phosphate + ATP = beta-D-fructose 1,6-bisphosphate + ADP + H(+). Its pathway is carbohydrate degradation; glycolysis; D-glyceraldehyde 3-phosphate and glycerone phosphate from D-glucose: step 3/4. Its activity is regulated as follows. Allosterically activated by ADP and other diphosphonucleosides, and allosterically inhibited by phosphoenolpyruvate. Functionally, catalyzes the phosphorylation of D-fructose 6-phosphate to fructose 1,6-bisphosphate by ATP, the first committing step of glycolysis. This Brevibacillus brevis (strain 47 / JCM 6285 / NBRC 100599) protein is ATP-dependent 6-phosphofructokinase.